The following is a 192-amino-acid chain: Thiosulfate reductase electron transfer subunit PhsB (192 aa).

4Fe-4S ferredoxin-type domains lie at 8-36 (YVMLHDEKRCIGCQACTVACKVLNDVPEG), 55-86 (THFQFVRVSCQHCENAPCVSVCPTGASYRDEN), and 87-116 (GIVQVDKSRCIGCDYCVAACPFHVRYLNPQ). The [4Fe-4S] cluster site is built by C17, C20, C23, C27, C64, C67, C72, C76, C96, C99, C102, C106, C123, C126, C139, and C143.

As to quaternary structure, composed of three subunits: PhsA, PhsB and PhsC. Requires [4Fe-4S] cluster as cofactor.

The protein localises to the cell inner membrane. Its function is as follows. Component of the PhsABC thiosulfate reductase that catalyzes the reduction of thiosulfate to sulfite and hydrogen sulfide, with menaquinol as the sole electron donor. Proton motive force (PMF) is required to drive transmembrane electron transfer within the reductase. The PhsB subunit transfers electrons between PhsC and PhsA. The polypeptide is Thiosulfate reductase electron transfer subunit PhsB (phsB) (Salmonella typhi).